A 441-amino-acid polypeptide reads, in one-letter code: Importin subunit alpha-8 (441 aa).

8 ARM repeats span residues 39 to 79 (QRDI…NIAV), 80 to 118 (DNPGVVVNNNAVPVLIQLIASPKDYVREQAIWTLSNVAG), 121 to 158 (IHYRDFVLNSGVLMPLLRLLYKDTTLRIATWALRNLCR), 160 to 199 (KPHPAFDQVKPALPALEILLHSHDEDVLKNACMALCHLSE), 202 to 241 (EDGIQSVIEAGFVPKLVQILQLPSPVVLVPALLTIGAMTA), 244 to 284 (HQQT…NITA), 287 to 326 (KEQIQSVIDANLIPILVNLAQDTDFYMKKEAVWAISNMAL), and 330 to 370 (HDQI…NMLK).

This sequence belongs to the importin alpha family. In terms of assembly, forms a complex with importin subunit beta-1.

Its subcellular location is the nucleus envelope. In terms of biological role, binds to conventional NLS motifs and mediates nuclear protein import across the nuclear envelope. The protein is Importin subunit alpha-8 of Arabidopsis thaliana (Mouse-ear cress).